We begin with the raw amino-acid sequence, 264 residues long: NADH dehydrogenase [ubiquinone] iron-sulfur protein 3, mitochondrial (264 aa).

A mitochondrion-targeting transit peptide spans 1-36; sequence MAAAAVARLWWRGILGASALTRGTGRPSVLLLPVRR.

The protein belongs to the complex I 30 kDa subunit family. In terms of assembly, core subunit of respiratory chain NADH dehydrogenase (Complex I) which is composed of 45 different subunits. Interacts with NDUFAF3. Interacts with RAB5IF. Found in subcomplexes containing subunits NDUFS2, MT-ND1 and NDUFA13.

It is found in the mitochondrion inner membrane. It carries out the reaction a ubiquinone + NADH + 5 H(+)(in) = a ubiquinol + NAD(+) + 4 H(+)(out). Core subunit of the mitochondrial membrane respiratory chain NADH dehydrogenase (Complex I) which catalyzes electron transfer from NADH through the respiratory chain, using ubiquinone as an electron acceptor. Essential for the catalytic activity and assembly of complex I. The chain is NADH dehydrogenase [ubiquinone] iron-sulfur protein 3, mitochondrial (NDUFS3) from Pan troglodytes (Chimpanzee).